Consider the following 220-residue polypeptide: Protein ABA DEFICIENT 4, chloroplastic (220 aa).

Residues 1-37 constitute a chloroplast transit peptide; that stretch reads MGFSSFISQPLSSSLSVMKRNVSAKRSELCLDSSKIR. 4 helical membrane passes run 77-97, 112-132, 154-174, and 195-215; these read IASS…TLMV, SVPY…SWTP, MFSS…VDLF, and SLCL…KAII.

As to expression, expressed in root vasculature, root hairs, leaves, trichomes, sepals, stamens, stigma, pedicels, siliques and embryo.

Its subcellular location is the plastid. The protein resides in the chloroplast membrane. In terms of biological role, required for neoxanthin biosynthesis, an intermediary step in abscisic acid (ABA) biosynthesis. Probably not involved directly in the enzymatic conversion of violaxanthin to neoxanthin. Cannot convert violaxanthin to neoxanthin in vitro. Required for ABA biosynthesis in response to drought stress. Required for neoxanthin biosynthesis which is involved in photoprotection of photosystem II (PSII). Neoxanthin acts as an antioxidant within the photosystem PSII supercomplex. In Arabidopsis thaliana (Mouse-ear cress), this protein is Protein ABA DEFICIENT 4, chloroplastic.